The primary structure comprises 699 residues: 1,4-alpha-glucan-branching enzyme (699 aa).

Substrate contacts are provided by residues 59 to 60 (NE) and 88 to 90 (WAP). Trp104 contacts (1,4-alpha-D-glucosyl)n. 115–118 (DYGK) serves as a coordination point for substrate. Lys140 is a (1,4-alpha-D-glucosyl)n binding site. Tyr170 is subject to Phosphotyrosine. A substrate-binding site is contributed by 330–333 (EVLR). Asp354 (nucleophile) is an active-site residue. Glu409 (proton donor) is an active-site residue.

This sequence belongs to the glycosyl hydrolase 13 family. GlgB subfamily. Monomer.

It carries out the reaction Transfers a segment of a (1-&gt;4)-alpha-D-glucan chain to a primary hydroxy group in a similar glucan chain.. The protein operates within glycan biosynthesis; glycogen biosynthesis. In terms of biological role, glycogen-branching enzyme participates in the glycogen biosynthetic process along with glycogenin and glycogen synthase. Generates alpha-1,6-glucosidic branches from alpha-1,4-linked glucose chains, to increase solubility of the glycogen polymer. In Felis catus (Cat), this protein is 1,4-alpha-glucan-branching enzyme (GBE1).